The chain runs to 301 residues: F1 operon positive regulatory protein (301 aa).

The HTH araC/xylS-type domain occupies 8–107; sequence NSIIQYIEEN…GYTPRQYRMI (100 aa). 2 consecutive DNA-binding regions (H-T-H motif) follow at residues 26-47 and 74-97; these read DCLV…KEYV and IIEI…KKIF.

Functionally, positive regulator of F1 operon expression. The polypeptide is F1 operon positive regulatory protein (caf1R) (Yersinia pestis).